We begin with the raw amino-acid sequence, 622 residues long: MPLDLKNYPLLTNINYPEDLRLLKKEQLPAFCNELRSFLLNTVSQTSGHLASGLGVVELTVALHYIYRTPFDNLIFDVGHQAYPHKILTGRRDKMGSIRNFKGLHPFPWREESEYDVLSVGHSSTSIGAALGMSIAAEKEQQGRKVVAVIGDGAITAGMAFEALNHAGSLHNDMLVVLNDNEMSISENVGALNNHLAKILSGDIYTQLREGSKKVLSNIPPVKELAKRTEEHLKGMISPATIFEEFGFNYIGPMDGHNVIDLVDTLRNMRSHSGPQFLHVMTKKGKGYKQAELDPIKYHAVPKFTPDQDLPKSPPSSATFSQVFGDWLNDMADQDNKLTAITPAMREGSGMVSFSKRHADKYYDVAIAEQHAVTLAAGMAIAGLNPVVAIYSTFLQRAYDQLIHDIAIQNLGVLFAIDRAGIVGADGPTHQGVFDLSFLRCVPNMIVMTPSDEQECRNMLYTGHMLNQPAAVRYPRGTGTGIEINKQMSRLTIGKAKVVKEGKNLAILCFGTFLQQAYSVAEKLNATLVDMRFVKPLDKELLDNLASTHKEFVTIEENSIAGGAGSAVNEYFMSQQIKTSVLNIGIPDRFIEQGTQQEIYTLLELDSAGIEKQIVSYYSHLK.

Thiamine diphosphate is bound by residues histidine 80 and 121-123 (GHS). Residue aspartate 152 coordinates Mg(2+). Residues 153–154 (GA), asparagine 181, tyrosine 288, and glutamate 369 each bind thiamine diphosphate. Asparagine 181 lines the Mg(2+) pocket.

This sequence belongs to the transketolase family. DXPS subfamily. Homodimer. Mg(2+) serves as cofactor. The cofactor is thiamine diphosphate.

The catalysed reaction is D-glyceraldehyde 3-phosphate + pyruvate + H(+) = 1-deoxy-D-xylulose 5-phosphate + CO2. It functions in the pathway metabolic intermediate biosynthesis; 1-deoxy-D-xylulose 5-phosphate biosynthesis; 1-deoxy-D-xylulose 5-phosphate from D-glyceraldehyde 3-phosphate and pyruvate: step 1/1. Its function is as follows. Catalyzes the acyloin condensation reaction between C atoms 2 and 3 of pyruvate and glyceraldehyde 3-phosphate to yield 1-deoxy-D-xylulose-5-phosphate (DXP). The polypeptide is 1-deoxy-D-xylulose-5-phosphate synthase (Psychromonas ingrahamii (strain DSM 17664 / CCUG 51855 / 37)).